Reading from the N-terminus, the 594-residue chain is AT-rich interactive domain-containing protein 5A (594 aa).

The disordered stretch occupies residues 1 to 56 (MAAPVKGNRKQSTEGDALDPPASPKPAGKQNGIQNPISLEDSPEAGGEREEEQERE). Positions 1–300 (MAAPVKGNRK…AVHLPESPQS (300 aa)) are interaction with SOX9. Residue Ser23 is modified to Phosphoserine. The region spanning 55-147 (REEEQAFLVS…LVLPYVRHLK (93 aa)) is the ARID domain. Glycyl lysine isopeptide (Lys-Gly) (interchain with G-Cter in ubiquitin) cross-links involve residues Lys85 and Lys94. The segment at 146–223 (LKGEDDKPLP…NSTEQQGLAS (78 aa)) is disordered. A compositionally biased stretch (basic and acidic residues) spans 165-189 (MAKENRGDDGATERPKKAKEERRMD). Ser256 and Ser289 each carry phosphoserine. 2 disordered regions span residues 281–331 (RHGA…EAQA) and 426–454 (AESP…GAAH). The span at 297–306 (SPQSPKGLTE) shows a compositional bias: polar residues. Phosphoserine occurs at positions 438 and 463.

In terms of assembly, interacts with SOX9. Interacts with ESR1. Interacts with RORC. In terms of processing, phosphorylated by MAPK14 on serine residues involving a TLR4 signaling pathway upon lipopolysaccharide (LPS) stimulation leading to its ubiquitination and proteasomal degradation. Ubiquitinated leading to proteasomal degradation; involving WWP1 linked to MAPK14-mediated phosphorylation upon LPS stimulation.

The protein localises to the nucleus. Functionally, DNA-binding protein that may regulate transcription and act as a repressor by binding to AT-rich stretches in the promoter region of target genes. May positively regulate chondrocyte-specific transcription such as of COL2A1 in collaboration with SOX9 and positively regulate histone H3 acetylation at chondrocyte-specific genes. May stimulate early-stage chondrocyte differentiation and inhibit later stage differention. Can repress ESR1-mediated transcriptional activation; proposed to act as corepressor for selective nuclear hormone receptors. As an RNA-binding protein, involved in the regulation of inflammatory response by stabilizing selective inflammation-related mRNAs, such as STAT3 and TBX21. Also stabilizes IL6 mRNA. Binds to stem loop structures located in the 3'UTRs of IL6, STAT3 and TBX21 mRNAs; at least for STAT3 prevents binding of ZC3H12A to the mRNA stem loop structure thus inhibiting its degradation activity. Contributes to elevated IL6 levels possibly implicated in autoimmunity processes. IL6-dependent stabilization of STAT3 mRNA may promote differentiation of naive CD4+ T-cells into T-helper Th17 cells. In CD4+ T-cells may also inhibit RORC-induced Th17 cell differentiation independently of IL6 signaling. Stabilization of TBX21 mRNA contributes to elevated interferon-gamma secretion in Th1 cells possibly implicated in the establishment of septic shock. Stabilizes TNFRSF4/OX40 mRNA by binding to the conserved stem loop structure in its 3'UTR; thereby competing with the mRNA-destabilizing functions of RC3H1 and endoribonuclease ZC3H12A. This Homo sapiens (Human) protein is AT-rich interactive domain-containing protein 5A (ARID5A).